Consider the following 116-residue polypeptide: Large ribosomal subunit protein uL18 (116 aa).

This sequence belongs to the universal ribosomal protein uL18 family. Part of the 50S ribosomal subunit; part of the 5S rRNA/L5/L18/L25 subcomplex. Contacts the 5S and 23S rRNAs.

Its function is as follows. This is one of the proteins that bind and probably mediate the attachment of the 5S RNA into the large ribosomal subunit, where it forms part of the central protuberance. The chain is Large ribosomal subunit protein uL18 from Psychrobacter arcticus (strain DSM 17307 / VKM B-2377 / 273-4).